Here is a 362-residue protein sequence, read N- to C-terminus: Cytochrome P450 monooxygenase-like protein avaN (362 aa).

Residues 3-23 traverse the membrane as a helical segment; that stretch reads VILAIFIAAAGCLFSSWRIYW.

This sequence belongs to the cytochrome P450 family.

The protein localises to the membrane. It functions in the pathway secondary metabolite biosynthesis. Cytochrome P450 monooxygenase-like protein; part of the cluster that mediates the biosynthesis of a highly modified cyclo-arginine-tryptophan dipeptide (cRW). The first step of the pathway is perfornmed by the arginine-containing cyclodipeptide synthase (RCPDS) avaA that acts as the scaffold-generating enzyme and is responsible for formation of the cyclo-Arg-Trp (cRW) diketopiperazine. AvaB then acts as a multifunctional flavoenzyme that is responsible for generating the cyclo-Arg-formylkynurenine DKP, which can be deformylated by avaC. AvaB then further catalyzes an additional N-oxidation followed by cyclization and dehydration. The next step is an N-acetylation of the guanidine group catalyzed by the arginine N-acetyltransferase avaD. The roles of the additional enzymes identified within the ava cluster still have to be determined. The protein is Cytochrome P450 monooxygenase-like protein avaN of Aspergillus versicolor.